Consider the following 158-residue polypeptide: uncharacterized protein (158 aa).

A helical membrane pass occupies residues 33–53 (VLAAVPQLGAAKVLVLLLLGV).

Its subcellular location is the membrane. This is an uncharacterized protein from Saccharomyces cerevisiae (strain ATCC 204508 / S288c) (Baker's yeast).